The primary structure comprises 435 residues: ATP-dependent protease ATPase subunit HslU (435 aa).

Residues Val-18, 60–65 (GVGKTE), Asp-248, Glu-313, and Arg-385 contribute to the ATP site.

This sequence belongs to the ClpX chaperone family. HslU subfamily. As to quaternary structure, a double ring-shaped homohexamer of HslV is capped on each side by a ring-shaped HslU homohexamer. The assembly of the HslU/HslV complex is dependent on binding of ATP.

The protein resides in the cytoplasm. ATPase subunit of a proteasome-like degradation complex; this subunit has chaperone activity. The binding of ATP and its subsequent hydrolysis by HslU are essential for unfolding of protein substrates subsequently hydrolyzed by HslV. HslU recognizes the N-terminal part of its protein substrates and unfolds these before they are guided to HslV for hydrolysis. In Azorhizobium caulinodans (strain ATCC 43989 / DSM 5975 / JCM 20966 / LMG 6465 / NBRC 14845 / NCIMB 13405 / ORS 571), this protein is ATP-dependent protease ATPase subunit HslU.